The following is a 142-amino-acid chain: Large ribosomal subunit protein uL13 (142 aa).

The protein belongs to the universal ribosomal protein uL13 family. As to quaternary structure, part of the 50S ribosomal subunit.

This protein is one of the early assembly proteins of the 50S ribosomal subunit, although it is not seen to bind rRNA by itself. It is important during the early stages of 50S assembly. The sequence is that of Large ribosomal subunit protein uL13 from Thioalkalivibrio sulfidiphilus (strain HL-EbGR7).